The primary structure comprises 215 residues: Serine acetyltransferase (215 aa).

This sequence belongs to the transferase hexapeptide repeat family.

Its subcellular location is the cytoplasm. It carries out the reaction L-serine + acetyl-CoA = O-acetyl-L-serine + CoA. It functions in the pathway amino-acid biosynthesis; L-cysteine biosynthesis; L-cysteine from L-serine: step 1/2. This Staphylococcus aureus (strain MRSA252) protein is Serine acetyltransferase (cysE).